The chain runs to 331 residues: uncharacterized protein (331 aa).

It to bacterial alkanal monooxygenase alpha and beta chains.

This is an uncharacterized protein from Bacillus subtilis (strain 168).